We begin with the raw amino-acid sequence, 421 residues long: UDP-N-acetylglucosamine 1-carboxyvinyltransferase (421 aa).

Phosphoenolpyruvate is bound at residue 22-23 (KN). R93 is a binding site for UDP-N-acetyl-alpha-D-glucosamine. The Proton donor role is filled by C117. The residue at position 117 (C117) is a 2-(S-cysteinyl)pyruvic acid O-phosphothioketal. UDP-N-acetyl-alpha-D-glucosamine is bound by residues 122 to 126 (RPVDL), D308, and I330.

This sequence belongs to the EPSP synthase family. MurA subfamily.

The protein resides in the cytoplasm. It catalyses the reaction phosphoenolpyruvate + UDP-N-acetyl-alpha-D-glucosamine = UDP-N-acetyl-3-O-(1-carboxyvinyl)-alpha-D-glucosamine + phosphate. The protein operates within cell wall biogenesis; peptidoglycan biosynthesis. In terms of biological role, cell wall formation. Adds enolpyruvyl to UDP-N-acetylglucosamine. The sequence is that of UDP-N-acetylglucosamine 1-carboxyvinyltransferase from Pseudomonas fluorescens (strain ATCC BAA-477 / NRRL B-23932 / Pf-5).